The chain runs to 357 residues: Membrane-bound lytic murein transglycosylase C (357 aa).

The signal sequence occupies residues 1 to 16; that stretch reads MKKLLALFVIAPILIS. The N-palmitoyl cysteine moiety is linked to residue cysteine 17. Cysteine 17 carries the S-diacylglycerol cysteine lipid modification.

Belongs to the transglycosylase Slt family.

It localises to the cell outer membrane. It catalyses the reaction Exolytic cleavage of the (1-&gt;4)-beta-glycosidic linkage between N-acetylmuramic acid (MurNAc) and N-acetylglucosamine (GlcNAc) residues in peptidoglycan, from either the reducing or the non-reducing ends of the peptidoglycan chains, with concomitant formation of a 1,6-anhydrobond in the MurNAc residue.. Murein-degrading enzyme. May play a role in recycling of muropeptides during cell elongation and/or cell division. In Photorhabdus laumondii subsp. laumondii (strain DSM 15139 / CIP 105565 / TT01) (Photorhabdus luminescens subsp. laumondii), this protein is Membrane-bound lytic murein transglycosylase C.